The chain runs to 193 residues: Small ribosomal subunit protein eS7 (193 aa).

This sequence belongs to the eukaryotic ribosomal protein eS7 family.

In Dictyostelium discoideum (Social amoeba), this protein is Small ribosomal subunit protein eS7 (rps7).